We begin with the raw amino-acid sequence, 838 residues long: Phosphatidylethanolamine N-methyltransferase 1 (838 aa).

Residues 1–48 (MATEIITEKKEIVARTRSSGITFNPPVTHDMVRSLFDPTIKKSFLECC) are Lumenal-facing. Residues 49–69 (ITLTILANFVLCYYLINWFGL) form a helical membrane-spanning segment. Topologically, residues 70 to 73 (SQAK) are cytoplasmic. A helical transmembrane segment spans residues 74-94 (LIFLIQYVYWRLAYNLGIGII). The Lumenal portion of the chain corresponds to 95 to 157 (LHYQSHYESL…ELNCWLLFRQ (63 aa)). The chain crosses the membrane as a helical span at residues 158–178 (FVDLILMQDFTTYIIYVYLSL). At 179-184 (PTDVSS) the chain is on the cytoplasmic side. Residues 185-205 (LINWKSLIGIAMILFNIWVKI) form a helical membrane-spanning segment. The Lumenal portion of the chain corresponds to 206–236 (DAHRVVKDYAWYWGDFFFLQDAELTFDGVFN). A helical membrane pass occupies residues 237–257 (ISPHPMYSIGYLGYYGLSLIC). Over 258-261 (GDYR) the chain is Cytoplasmic. A helical membrane pass occupies residues 262–282 (VLLVSVGGHFLQFLFLKYVES). The Lumenal segment spans residues 283–328 (PHIERTYGSDSPSNSTQHQIDDLIAKENYDYSRPLINTGILFENFQ). A helical membrane pass occupies residues 329–349 (FLRFSDYFTVSTILVLFSWFF). Residues 350-356 (TSKPSNN) are Cytoplasmic-facing. Residues 357-377 (FLFVLTLLTKLTTWLLTSWIL) traverse the membrane as a helical segment. Residues 378-403 (FQQSNRKWFTRLFLKNGYTQIYSYQQ) lie on the Lumenal side of the membrane. The helical transmembrane segment at 404 to 424 (WQFLYNYSLIVTNTLLFLHTL) threads the bilayer. Over 425 to 435 (SELYSIQSSDG) the chain is Cytoplasmic. Residues 436–456 (LNNSHVIFGLLLCAIQIWCNV) form a helical membrane-spanning segment. Over 457 to 517 (ETRDAISDFG…VLMTNFSKTN (61 aa)) the chain is Lumenal. The chain crosses the membrane as a helical span at residues 518-538 (VTLAVLWTVTNLIFVKLIEEP). Residues 539–838 (HVSKVYGNGT…DIKEVLDSLN (300 aa)) lie on the Cytoplasmic side of the membrane.

Belongs to the class VI-like SAM-binding methyltransferase superfamily. CHO2 family.

It is found in the endoplasmic reticulum membrane. The catalysed reaction is a 1,2-diacyl-sn-glycero-3-phosphoethanolamine + S-adenosyl-L-methionine = a 1,2-diacyl-sn-glycero-3-phospho-N-methylethanolamine + S-adenosyl-L-homocysteine + H(+). The protein operates within phospholipid metabolism; phosphatidylcholine biosynthesis. In terms of biological role, catalyzes the first step of the methylation pathway of phosphatidylcholine biosynthesis, the SAM-dependent methylation of phosphatidylethanolamine (PE) to phosphatidylmonomethylethanolamine (PMME). In Vanderwaltozyma polyspora (strain ATCC 22028 / DSM 70294 / BCRC 21397 / CBS 2163 / NBRC 10782 / NRRL Y-8283 / UCD 57-17) (Kluyveromyces polysporus), this protein is Phosphatidylethanolamine N-methyltransferase 1 (CHO2-1).